The sequence spans 107 residues: Phosphoribosyl-ATP pyrophosphatase (107 aa).

The protein belongs to the PRA-PH family.

Its subcellular location is the cytoplasm. It carries out the reaction 1-(5-phospho-beta-D-ribosyl)-ATP + H2O = 1-(5-phospho-beta-D-ribosyl)-5'-AMP + diphosphate + H(+). Its pathway is amino-acid biosynthesis; L-histidine biosynthesis; L-histidine from 5-phospho-alpha-D-ribose 1-diphosphate: step 2/9. The protein is Phosphoribosyl-ATP pyrophosphatase of Bacillus mycoides (strain KBAB4) (Bacillus weihenstephanensis).